The sequence spans 276 residues: Omega-amidase NIT2-A (276 aa).

The CN hydrolase domain occupies 4–248 (FKLSLVQFLV…ETVLSAEIDL (245 aa)). The Proton acceptor role is filled by Glu-43. The active-site Proton donor is the Lys-112. Catalysis depends on Cys-153, which acts as the Nucleophile.

This sequence belongs to the carbon-nitrogen hydrolase superfamily. NIT1/NIT2 family. Homodimer.

Its subcellular location is the cytoplasm. The catalysed reaction is 2-oxoglutaramate + H2O = 2-oxoglutarate + NH4(+). It catalyses the reaction 2-oxosuccinamate + H2O = oxaloacetate + NH4(+). Has omega-amidase activity. The role of omega-amidase is to remove potentially toxic intermediates by converting 2-oxoglutaramate and 2-oxosuccinamate to biologically useful 2-oxoglutarate and oxaloacetate, respectively. The protein is Omega-amidase NIT2-A (nit2a) of Xenopus laevis (African clawed frog).